A 409-amino-acid polypeptide reads, in one-letter code: Nucleoprotein (409 aa).

Disordered stretches follow at residues 1–32, 44–69, 121–194, and 238–259; these read MASG…SSGN, LNSP…QQHG, ADVK…GSED, and VDQV…DKMN. The interval 29–160 is RNA-binding; sequence SSGNASWFQA…GNFRWDFIPL (132 aa). In terms of domain architecture, CoV N NTD spans 31–156; it reads GNASWFQAIK…GGPDGNFRWD (126 aa). Residues 162-179 are compositionally biased toward low complexity; it reads RGRSGRSTAASSAASSRP. 2 stretches are compositionally biased toward basic and acidic residues: residues 180–192 and 247–259; these read PSRE…RSGS and KGKE…DKMN. 2 positions are modified to phosphoserine; by host: serine 190 and serine 192. The CoV N CTD domain occupies 215–331; the sequence is TKAKADEMAH…QCVDGVGTRP (117 aa). The segment at 226-333 is dimerization; the sequence is RYCKRTIPPG…VDGVGTRPKD (108 aa). An intrachain disulfide couples cysteine 320 to cysteine 323. The tract at residues 326–409 is disordered; it reads GVGTRPKDDE…GDSALGENEL (84 aa). The span at 341 to 356 shows a compositional bias: low complexity; it reads RSSSRPATRTSSPAPR. A compositionally biased stretch (basic residues) spans 358–367; sequence QRLKKEKRPK. Basic and acidic residues predominate over residues 368–384; it reads KQDDEVDKALTSDEERN. Threonine 378 is modified (phosphothreonine; by host). Serine 379 carries the phosphoserine; by host modification.

Belongs to the gammacoronavirus nucleocapsid protein family. Homooligomer. Both monomeric and oligomeric forms interact with RNA. Interacts with protein M. Interacts with NSP3; this interaction serves to tether the genome to the newly translated replicase-transcriptase complex at a very early stage of infection. ADP-ribosylated. The ADP-ribosylation is retained in the virion during infection. Post-translationally, phosphorylated on serine and threonine residues.

Its subcellular location is the virion. The protein resides in the host endoplasmic reticulum-Golgi intermediate compartment. The protein localises to the host Golgi apparatus. Its function is as follows. Packages the positive strand viral genome RNA into a helical ribonucleocapsid (RNP) and plays a fundamental role during virion assembly through its interactions with the viral genome and membrane protein M. Plays an important role in enhancing the efficiency of subgenomic viral RNA transcription as well as viral replication. This chain is Nucleoprotein, found in Gallus gallus (Chicken).